Reading from the N-terminus, the 369-residue chain is uncharacterized protein (369 aa).

This is an uncharacterized protein from Archaeoglobus fulgidus (strain ATCC 49558 / DSM 4304 / JCM 9628 / NBRC 100126 / VC-16).